We begin with the raw amino-acid sequence, 361 residues long: Phospho-N-acetylmuramoyl-pentapeptide-transferase (361 aa).

The next 10 membrane-spanning stretches (helical) occupy residues 25-45 (RAVM…PWVI), 73-93 (TMGG…WADL), 97-117 (YVWL…YDDW), 132-152 (FKMA…IATA), 167-187 (TVAY…VIVG), 200-220 (GLAA…AYVA), 240-260 (VVVF…FNAY), 264-284 (VFMG…VAVI), 289-309 (IVLF…MIQV), and 338-358 (QVVV…LSTL).

The protein belongs to the glycosyltransferase 4 family. MraY subfamily. Mg(2+) serves as cofactor.

The protein resides in the cell inner membrane. The catalysed reaction is UDP-N-acetyl-alpha-D-muramoyl-L-alanyl-gamma-D-glutamyl-meso-2,6-diaminopimeloyl-D-alanyl-D-alanine + di-trans,octa-cis-undecaprenyl phosphate = di-trans,octa-cis-undecaprenyl diphospho-N-acetyl-alpha-D-muramoyl-L-alanyl-D-glutamyl-meso-2,6-diaminopimeloyl-D-alanyl-D-alanine + UMP. It functions in the pathway cell wall biogenesis; peptidoglycan biosynthesis. Functionally, catalyzes the initial step of the lipid cycle reactions in the biosynthesis of the cell wall peptidoglycan: transfers peptidoglycan precursor phospho-MurNAc-pentapeptide from UDP-MurNAc-pentapeptide onto the lipid carrier undecaprenyl phosphate, yielding undecaprenyl-pyrophosphoryl-MurNAc-pentapeptide, known as lipid I. This chain is Phospho-N-acetylmuramoyl-pentapeptide-transferase, found in Chromobacterium violaceum (strain ATCC 12472 / DSM 30191 / JCM 1249 / CCUG 213 / NBRC 12614 / NCIMB 9131 / NCTC 9757 / MK).